Reading from the N-terminus, the 117-residue chain is Small nuclear ribonucleoprotein Sm D1 (117 aa).

The region spanning 2-74 is the Sm domain; the sequence is KLVRFLMKLT…IRYYILPDSL (73 aa). The interval 81 to 117 is disordered; sequence IDDSTKPKQKKKEVVRGRGRGRGRGTRGRGRGASRGF. A compositionally biased stretch (basic residues) spans 87 to 117; that stretch reads PKQKKKEVVRGRGRGRGRGTRGRGRGASRGF.

Belongs to the snRNP core protein family. Belongs to the 40S cdc5-associated complex (or cwf complex), a spliceosome sub-complex reminiscent of a late-stage spliceosome composed of the U2, U5 and U6 snRNAs and at least brr2, cdc5, cwf2/prp3, cwf3/syf1, cwf4/syf3, cwf5/ecm2, spp42/cwf6, cwf7/spf27, cwf8, cwf9, cwf10, cwf11, cwf12, prp45/cwf13, cwf14, cwf15, cwf16, cwf17, cwf18, cwf19, cwf20, cwf21, cwf22, cwf23, cwf24, cwf25, cwf26, cyp7/cwf27, cwf28, cwf29/ist3, lea1, msl1, prp5/cwf1, prp10, prp12/sap130, prp17, prp22, sap61, sap62, sap114, sap145, slu7, smb1, smd1, smd3, smf1, smg1 and syf2. Interacts with saf5; the interaction is direct.

It is found in the nucleus. The protein localises to the cytoplasm. In terms of biological role, plays a role in pre-mRNA splicing as a core component of the spliceosomal U1, U2, U4 and U5 small nuclear ribonucleoproteins (snRNPs), the building blocks of the spliceosome. The sequence is that of Small nuclear ribonucleoprotein Sm D1 (smd1) from Schizosaccharomyces pombe (strain 972 / ATCC 24843) (Fission yeast).